Here is a 140-residue protein sequence, read N- to C-terminus: Small ribosomal subunit protein uS12 (140 aa).

The segment at methionine 1–aspartate 20 is disordered. Aspartate 102 carries the 3-methylthioaspartic acid modification. The segment at aspartate 121 to lysine 140 is disordered. Residues tyrosine 130–lysine 140 are compositionally biased toward basic residues.

This sequence belongs to the universal ribosomal protein uS12 family. In terms of assembly, part of the 30S ribosomal subunit. Contacts proteins S8 and S17. May interact with IF1 in the 30S initiation complex.

Functionally, with S4 and S5 plays an important role in translational accuracy. In terms of biological role, interacts with and stabilizes bases of the 16S rRNA that are involved in tRNA selection in the A site and with the mRNA backbone. Located at the interface of the 30S and 50S subunits, it traverses the body of the 30S subunit contacting proteins on the other side and probably holding the rRNA structure together. The combined cluster of proteins S8, S12 and S17 appears to hold together the shoulder and platform of the 30S subunit. This is Small ribosomal subunit protein uS12 from Exiguobacterium sibiricum (strain DSM 17290 / CCUG 55495 / CIP 109462 / JCM 13490 / 255-15).